Here is a 223-residue protein sequence, read N- to C-terminus: Deoxyribose-phosphate aldolase (223 aa).

Asp-91 functions as the Proton donor/acceptor in the catalytic mechanism. Lys-154 (schiff-base intermediate with acetaldehyde) is an active-site residue. The active-site Proton donor/acceptor is Lys-183.

The protein belongs to the DeoC/FbaB aldolase family. DeoC type 1 subfamily.

Its subcellular location is the cytoplasm. The enzyme catalyses 2-deoxy-D-ribose 5-phosphate = D-glyceraldehyde 3-phosphate + acetaldehyde. It participates in carbohydrate degradation; 2-deoxy-D-ribose 1-phosphate degradation; D-glyceraldehyde 3-phosphate and acetaldehyde from 2-deoxy-alpha-D-ribose 1-phosphate: step 2/2. Catalyzes a reversible aldol reaction between acetaldehyde and D-glyceraldehyde 3-phosphate to generate 2-deoxy-D-ribose 5-phosphate. This chain is Deoxyribose-phosphate aldolase, found in Geobacillus sp. (strain WCH70).